A 65-amino-acid chain; its full sequence is MAMAIDGYECTVCGDCEPVCPTGSIVFRDDHYAIEADSCNECTDVGEPRCLGVCPVDLCIQPLDD.

2 4Fe-4S ferredoxin-type domains span residues 2–30 and 32–65; these read AMAI…FRDD and YAIE…PLDD. [4Fe-4S] cluster contacts are provided by Cys-10, Cys-13, Cys-16, Cys-20, Cys-39, Cys-42, Cys-50, and Cys-54.

It depends on [4Fe-4S] cluster as a cofactor.

This chain is Ferredoxin-like protein in vnf region, found in Azotobacter vinelandii.